The sequence spans 219 residues: Oligoribonuclease (219 aa).

In terms of domain architecture, Exonuclease spans 30–193; sequence LVWLDMEMTG…ADIVESIEEL (164 aa). The active site involves Y151.

It belongs to the oligoribonuclease family.

Its subcellular location is the cytoplasm. 3'-to-5' exoribonuclease specific for small oligoribonucleotides. This chain is Oligoribonuclease, found in Ralstonia nicotianae (strain ATCC BAA-1114 / GMI1000) (Ralstonia solanacearum).